Reading from the N-terminus, the 356-residue chain is UDP-N-acetylglucosamine--N-acetylmuramyl-(pentapeptide) pyrophosphoryl-undecaprenol N-acetylglucosamine transferase (356 aa).

UDP-N-acetyl-alpha-D-glucosamine-binding positions include 12 to 14 (TGG), asparagine 124, arginine 163, serine 188, isoleucine 242, 261 to 266 (ALTVSE), and glutamine 287.

It belongs to the glycosyltransferase 28 family. MurG subfamily.

It is found in the cell inner membrane. It catalyses the reaction di-trans,octa-cis-undecaprenyl diphospho-N-acetyl-alpha-D-muramoyl-L-alanyl-D-glutamyl-meso-2,6-diaminopimeloyl-D-alanyl-D-alanine + UDP-N-acetyl-alpha-D-glucosamine = di-trans,octa-cis-undecaprenyl diphospho-[N-acetyl-alpha-D-glucosaminyl-(1-&gt;4)]-N-acetyl-alpha-D-muramoyl-L-alanyl-D-glutamyl-meso-2,6-diaminopimeloyl-D-alanyl-D-alanine + UDP + H(+). Its pathway is cell wall biogenesis; peptidoglycan biosynthesis. Functionally, cell wall formation. Catalyzes the transfer of a GlcNAc subunit on undecaprenyl-pyrophosphoryl-MurNAc-pentapeptide (lipid intermediate I) to form undecaprenyl-pyrophosphoryl-MurNAc-(pentapeptide)GlcNAc (lipid intermediate II). This is UDP-N-acetylglucosamine--N-acetylmuramyl-(pentapeptide) pyrophosphoryl-undecaprenol N-acetylglucosamine transferase from Ectopseudomonas mendocina (strain ymp) (Pseudomonas mendocina).